A 255-amino-acid polypeptide reads, in one-letter code: Ribonuclease PH (255 aa).

Phosphate contacts are provided by residues R86 and 124–126 (GTR).

It belongs to the RNase PH family. As to quaternary structure, homohexameric ring arranged as a trimer of dimers.

The catalysed reaction is tRNA(n+1) + phosphate = tRNA(n) + a ribonucleoside 5'-diphosphate. Functionally, phosphorolytic 3'-5' exoribonuclease that plays an important role in tRNA 3'-end maturation. Removes nucleotide residues following the 3'-CCA terminus of tRNAs; can also add nucleotides to the ends of RNA molecules by using nucleoside diphosphates as substrates, but this may not be physiologically important. Probably plays a role in initiation of 16S rRNA degradation (leading to ribosome degradation) during starvation. In Geobacillus sp. (strain WCH70), this protein is Ribonuclease PH.